Reading from the N-terminus, the 88-residue chain is UPF0335 protein WRi_003770 (88 aa).

The protein belongs to the UPF0335 family.

The protein is UPF0335 protein WRi_003770 of Wolbachia sp. subsp. Drosophila simulans (strain wRi).